The following is a 266-amino-acid chain: Adaptin ear-binding coat-associated protein 2 (266 aa).

Disordered regions lie at residues 165 to 198 and 245 to 266; these read MRKK…KSST and DFTK…WVQF. Ser-181 carries the post-translational modification Phosphoserine. Short sequence motifs (WXXF motif) lie at residues 243 to 246 and 263 to 266; these read WGDF and WVQF. Residues 249–266 are compositionally biased toward low complexity; it reads STGSPSSQSQPGTGWVQF.

This sequence belongs to the NECAP family. As to quaternary structure, interacts with AP1G1 and AP2A1 components of the adapter protein complexes AP-1 and AP-2. Interacts with the GAE domain proteins GGA1, GGA2 and GGA3. As to expression, expressed in brain, heart, kidney, liver, lung, skeletal muscles and testis (at protein level).

The protein localises to the cytoplasmic vesicle. Its subcellular location is the clathrin-coated vesicle membrane. The protein resides in the cell membrane. Its function is as follows. Involved in endocytosis. The chain is Adaptin ear-binding coat-associated protein 2 (Necap2) from Mus musculus (Mouse).